Reading from the N-terminus, the 378-residue chain is MKILVDENMPYARDLFSRLGEVTAVPGRPIPVAQLADADALMVRSVTKVNESLLAGKPIKFVGTATAGTDHVDEAWLKQAGIGFSAAPGCNAIAVVEYVFSSLLMLAERDGFSLHERTVGIVGVGNVGRRLQARLEALGIKTLLCDPPRADRGDEGDFRSLDELVQHADILTFHTPLFKDGPYKTLHLADEKLIRSLKPGAILINACRGAVVDNTALLTCLNEGQKLSVVLDVWEGEPELNVELLKKVDIGTPHIAGYTLEGKARGTTQVFEAYSKFIGHEQHVALDTLLPAPEFGRITLHGPLDQPTLKRLVHLVYDVRRDDAPLRKVAGIPGEFDKLRKNYLERREWSSLYVICDDASAASLLCKLGFNAVHHPAR.

Substrate is bound by residues Ser45 and Thr66. The NAD(+) site is built by Asp146 and Thr175. Arg208 is a catalytic residue. Asp232 serves as a coordination point for NAD(+). Glu237 is a catalytic residue. Catalysis depends on His254, which acts as the Proton donor. Gly257 provides a ligand contact to NAD(+). Substrate is bound at residue Tyr258.

Belongs to the D-isomer specific 2-hydroxyacid dehydrogenase family. PdxB subfamily. In terms of assembly, homodimer.

Its subcellular location is the cytoplasm. It carries out the reaction 4-phospho-D-erythronate + NAD(+) = (R)-3-hydroxy-2-oxo-4-phosphooxybutanoate + NADH + H(+). The protein operates within cofactor biosynthesis; pyridoxine 5'-phosphate biosynthesis; pyridoxine 5'-phosphate from D-erythrose 4-phosphate: step 2/5. In terms of biological role, catalyzes the oxidation of erythronate-4-phosphate to 3-hydroxy-2-oxo-4-phosphonooxybutanoate. The sequence is that of Erythronate-4-phosphate dehydrogenase from Escherichia coli O6:H1 (strain CFT073 / ATCC 700928 / UPEC).